The following is a 32-amino-acid chain: Glutathione S-transferase 8.2 (32 aa).

21-22 (QS) is a binding site for glutathione.

Belongs to the GST superfamily. Alpha family. In terms of assembly, homodimer. Post-translationally, the N-terminus is blocked.

Its subcellular location is the cytoplasm. It carries out the reaction RX + glutathione = an S-substituted glutathione + a halide anion + H(+). In terms of biological role, conjugation of reduced glutathione to a wide number of exogenous and endogenous hydrophobic electrophiles. The protein is Glutathione S-transferase 8.2 of Dicentrarchus labrax (European seabass).